A 546-amino-acid chain; its full sequence is Chaperonin GroEL 2 (546 aa).

Residues 30–33 (TLGP), lysine 51, 87–91 (DGTTT), glycine 415, 479–481 (NAA), and aspartate 495 contribute to the ATP site. Positions 526-546 (KEDAPMPGGMPGGMGGMGMDM) are disordered. Residues 534–546 (GMPGGMGGMGMDM) are compositionally biased toward gly residues.

This sequence belongs to the chaperonin (HSP60) family. In terms of assembly, forms a cylinder of 14 subunits composed of two heptameric rings stacked back-to-back. Interacts with the co-chaperonin GroES.

The protein localises to the cytoplasm. It catalyses the reaction ATP + H2O + a folded polypeptide = ADP + phosphate + an unfolded polypeptide.. Its function is as follows. Together with its co-chaperonin GroES, plays an essential role in assisting protein folding. The GroEL-GroES system forms a nano-cage that allows encapsulation of the non-native substrate proteins and provides a physical environment optimized to promote and accelerate protein folding. The sequence is that of Chaperonin GroEL 2 from Burkholderia lata (strain ATCC 17760 / DSM 23089 / LMG 22485 / NCIMB 9086 / R18194 / 383).